A 168-amino-acid polypeptide reads, in one-letter code: Small ribosomal subunit protein uS7c (168 aa).

Belongs to the universal ribosomal protein uS7 family. As to quaternary structure, part of the 30S ribosomal subunit.

Its subcellular location is the plastid. The protein resides in the chloroplast. Functionally, one of the primary rRNA binding proteins, it binds directly to 16S rRNA where it nucleates assembly of the head domain of the 30S subunit. The protein is Small ribosomal subunit protein uS7c (rps7) of Chlamydomonas reinhardtii (Chlamydomonas smithii).